A 315-amino-acid polypeptide reads, in one-letter code: tRNA-dihydrouridine(16) synthase (315 aa).

FMN-binding positions include 7 to 9 (PME) and glutamine 68. The active-site Proton donor is cysteine 98. Residues lysine 139, 200-202 (NGE), and 224-225 (GR) each bind FMN.

This sequence belongs to the Dus family. DusC subfamily. The cofactor is FMN.

The catalysed reaction is 5,6-dihydrouridine(16) in tRNA + NADP(+) = uridine(16) in tRNA + NADPH + H(+). The enzyme catalyses 5,6-dihydrouridine(16) in tRNA + NAD(+) = uridine(16) in tRNA + NADH + H(+). Its function is as follows. Catalyzes the synthesis of 5,6-dihydrouridine (D), a modified base found in the D-loop of most tRNAs, via the reduction of the C5-C6 double bond in target uridines. Specifically modifies U16 in tRNAs. This chain is tRNA-dihydrouridine(16) synthase, found in Shigella flexneri.